The sequence spans 389 residues: SH3 and F-BAR domain-containing protein DDB_G0274695 (389 aa).

An F-BAR domain is found at Glu-3–Asp-258. Residues Lys-119–Leu-192 adopt a coiled-coil conformation. A compositionally biased stretch (low complexity) spans Leu-300–Pro-328. The interval Leu-300 to Ile-329 is disordered. An SH3 domain is found at Ser-332–Ile-389.

In Dictyostelium discoideum (Social amoeba), this protein is SH3 and F-BAR domain-containing protein DDB_G0274695.